A 108-amino-acid chain; its full sequence is UPF0060 membrane protein RHOS4_03690 (108 aa).

4 consecutive transmembrane segments (helical) span residues 5-25 (LAAYAGAALAEIAGCFAVWAW), 32-52 (ALWLVPGALSLGTFAWLLALT), 62-82 (AVYGGVYVAASLLWLWAVEGV), and 86-106 (RWDMGGAALVLAGAAVILWAP).

It belongs to the UPF0060 family.

Its subcellular location is the cell inner membrane. In Cereibacter sphaeroides (strain ATCC 17023 / DSM 158 / JCM 6121 / CCUG 31486 / LMG 2827 / NBRC 12203 / NCIMB 8253 / ATH 2.4.1.) (Rhodobacter sphaeroides), this protein is UPF0060 membrane protein RHOS4_03690.